Here is a 363-residue protein sequence, read N- to C-terminus: D(1) dopamine receptor (363 aa).

Residues 1–24 (MAVLDLNLTTVIDSGFMESDRSVR) lie on the Extracellular side of the membrane. N-linked (GlcNAc...) asparagine glycosylation occurs at Asn-7. A helical membrane pass occupies residues 25–45 (VLTGCFLSVLILSTLLGNTLV). The Cytoplasmic portion of the chain corresponds to 46–61 (CAAVTKFRHLRSKVTN). Residues 62–81 (FFVISLAVSDLLVAVLVMPW) form a helical membrane-spanning segment. Over 82–98 (KAVTEVAGFWPFGAFCD) the chain is Extracellular. Cys-97 and Cys-187 are joined by a disulfide. Residues 99 to 120 (IWVAFDIMCSTASILNLCVISV) traverse the membrane as a helical segment. Over 121–139 (DRYWAISSPFRYERKMTPR) the chain is Cytoplasmic. The chain crosses the membrane as a helical span at residues 140 to 164 (VAFVMISGAWTLSVLISFIPVQLKW). Residues 165–194 (HKAQPIGFLEVNASRRDLPTDNCDSSLNRT) lie on the Extracellular side of the membrane. The chain crosses the membrane as a helical span at residues 195 to 219 (YAISSSLISFYIPVAIMIVTYTQIY). Residues 220 to 271 (RIAQKQIRRISALERAAESAQIRHDSMGSGSNMDLESSFKLSFKRETKVLKT) lie on the Cytoplasmic side of the membrane. Residues 272-297 (LSVIMGVFVCCWLPFFILNCMVPFCK) traverse the membrane as a helical segment. Residues 298–310 (RTSNGLPCISPTT) are Extracellular-facing. Residues 311–330 (FDVFVWFGWANSSLNPIIYA) traverse the membrane as a helical segment. Residues 331–363 (FNADFRRAFAILLGCQRLCPGSISMETPSLNKN) lie on the Cytoplasmic side of the membrane. Cys-345 carries S-palmitoyl cysteine lipidation.

The protein belongs to the G-protein coupled receptor 1 family. Retina.

Its subcellular location is the cell membrane. The protein resides in the cell projection. It localises to the cilium membrane. Dopamine receptor whose activity is mediated by G proteins which activate adenylyl cyclase. Could be involved in growth hormone release. The chain is D(1) dopamine receptor from Carassius auratus (Goldfish).